Here is a 514-residue protein sequence, read N- to C-terminus: Antiseptic resistance protein (514 aa).

Residues 1–23 are Cytoplasmic-facing; it reads MISFFTKTTDMMTSKKRWTALVV. The chain crosses the membrane as a helical span at residues 24–41; the sequence is LAVSLFVVTMDMTILIMA. The Extracellular portion of the chain corresponds to 42–57; the sequence is LPELVRELEPSGTQQL. A helical transmembrane segment spans residues 58–75; that stretch reads WIVDIYSLVLAGFIIPLS. The Cytoplasmic segment spans residues 76–86; that stretch reads AFADKWGRKKA. Residues 87 to 104 traverse the membrane as a helical segment; the sequence is LLTGFALFGLVSLAIFFA. The Extracellular portion of the chain corresponds to 105 to 112; the sequence is ESAEFVIA. The chain crosses the membrane as a helical span at residues 113–130; the sequence is IRFLLGIAGALIMPTTLS. Residues 131-146 are Cytoplasmic-facing; the sequence is MIRVIFENPKERATAL. Residues 147–164 form a helical membrane-spanning segment; the sequence is AVWSIASSIGAVFGPIIG. Topologically, residues 165–172 are extracellular; sequence GALLEQFS. The helical transmembrane segment at 173–190 threads the bilayer; it reads WHSAFLINVPFAIIAVVA. Residues 191–207 lie on the Cytoplasmic side of the membrane; that stretch reads GLFLLPESKLSKEKSHS. Residues 208–225 traverse the membrane as a helical segment; sequence WDIPSTILSIAGMIGLVW. The Extracellular segment spans residues 226–237; the sequence is SIKEFSKEGLAD. The chain crosses the membrane as a helical span at residues 238–255; it reads IIPWVVIVLAITMIVIFV. Topologically, residues 256-278 are cytoplasmic; sequence KRNLSSSDPMLDVRLFKKRSFSA. The chain crosses the membrane as a helical span at residues 279 to 295; it reads GTIAAFMTMFAMASVLL. At 296–315 the chain is on the extracellular side; that stretch reads LASQWLQVVEELSPFKAGLY. Residues 316–333 traverse the membrane as a helical segment; that stretch reads LLPMAIGDMVFAPIAPGL. The Cytoplasmic segment spans residues 334–341; sequence AARFGPKI. Residues 342–360 traverse the membrane as a helical segment; it reads VLPSGIGIAAIGMFIMYFF. Over 361–369 the chain is Extracellular; sequence GHPLSYSTM. The chain crosses the membrane as a helical span at residues 370 to 387; the sequence is ALALILVGAGMASLAVAS. The Cytoplasmic portion of the chain corresponds to 388-408; the sequence is ALIMLETPTSKAGNAAAVEES. Residues 409-426 traverse the membrane as a helical segment; the sequence is MYDLGNVFGVAVLGSLSS. The Extracellular segment spans residues 427–481; the sequence is MLYRVFLDISSFSSKGIVGDLAHVAEESVVGAVEVAKATGIKQLANEAVTSFNDA. The chain crosses the membrane as a helical span at residues 482–499; sequence FVATALVGGIIMIIISIV. The Cytoplasmic portion of the chain corresponds to 500-514; it reads VYLLIPKSLDITKQK.

This sequence belongs to the major facilitator superfamily.

It localises to the cell membrane. In terms of biological role, confers export-mediated resistance against antiseptic and disinfectant compounds such as intercalating dyes, quaternary ammonium salts and diamidines. The protein is Antiseptic resistance protein (qacA) of Staphylococcus aureus (strain Mu50 / ATCC 700699).